Here is a 228-residue protein sequence, read N- to C-terminus: uncharacterized protein (228 aa).

The first 23 residues, 1 to 23 (MIRHTRLLLASLCLIATGARASA), serve as a signal peptide directing secretion.

This is an uncharacterized protein from Methylorubrum extorquens (strain ATCC 14718 / DSM 1338 / JCM 2805 / NCIMB 9133 / AM1) (Methylobacterium extorquens).